Here is a 321-residue protein sequence, read N- to C-terminus: Phospholipid phosphatase-related protein type 5 (321 aa).

The next 6 membrane-spanning stretches (helical) occupy residues 6–26 (VALI…TVML), 62–82 (AVPP…VIIV), 122–142 (FLGI…AGQV), 196–213 (AALS…ITST), 225–245 (VLCL…VAEY), and 252–272 (VIAG…CVVN).

The protein belongs to the PA-phosphatase related phosphoesterase family.

It is found in the cell membrane. In terms of biological role, induces filopodia formation and promotes neurite growth in a CDC42-independent manner; impedes neurite growth inhibitory-mediated axonal retraction. This is Phospholipid phosphatase-related protein type 5 from Mus musculus (Mouse).